Consider the following 157-residue polypeptide: MSNASGGGPRPRRRDGVDPALRSRARRRALQAVYAWQISGGVAKQVIAHFAHEQAYEVADLAYFEDLVEGVLTHCAELDEKLTPYLDRTIEEVDAIERAVLRLGAYELLYRQDVPYRVVINEAIMTAKRFGSKYGHTYVNGVLDRAALALRKVEVLG.

The protein belongs to the NusB family.

Involved in transcription antitermination. Required for transcription of ribosomal RNA (rRNA) genes. Binds specifically to the boxA antiterminator sequence of the ribosomal RNA (rrn) operons. The sequence is that of Transcription antitermination protein NusB from Xylella fastidiosa (strain 9a5c).